The following is a 168-amino-acid chain: Transcriptional repressor NrdR (168 aa).

Residues M1 to S21 are disordered. A zinc finger spans residues C3–C34. Residues R7–E20 show a composition bias toward basic and acidic residues. The ATP-cone domain occupies I49–D139.

It belongs to the NrdR family. The cofactor is Zn(2+).

Functionally, negatively regulates transcription of bacterial ribonucleotide reductase nrd genes and operons by binding to NrdR-boxes. The protein is Transcriptional repressor NrdR of Synechococcus elongatus (strain ATCC 33912 / PCC 7942 / FACHB-805) (Anacystis nidulans R2).